We begin with the raw amino-acid sequence, 120 residues long: MAQLAKFDVPEELTNKALEALELARDTGKIKKGTNEATKAIERGNAKLVLIAEDIEPAEIVAHIGPLSEEKKAPYIFIKNQKELGAASGLGVSCATVAIVDAGKAAEMVQDIAQKLEALK.

It belongs to the eukaryotic ribosomal protein eL8 family. As to quaternary structure, part of the 50S ribosomal subunit. Probably part of the RNase P complex.

It localises to the cytoplasm. Its function is as follows. Multifunctional RNA-binding protein that recognizes the K-turn motif in ribosomal RNA, the RNA component of RNase P, box H/ACA, box C/D and box C'/D' sRNAs. The sequence is that of Large ribosomal subunit protein eL8 from Methanosarcina acetivorans (strain ATCC 35395 / DSM 2834 / JCM 12185 / C2A).